The chain runs to 37 residues: Large ribosomal subunit protein bL36 (37 aa).

This sequence belongs to the bacterial ribosomal protein bL36 family.

The chain is Large ribosomal subunit protein bL36 from Hydrogenobaculum sp. (strain Y04AAS1).